Here is a 192-residue protein sequence, read N- to C-terminus: ADP-ribosylation factor-like protein 14 (192 aa).

Residue Gly-2 is the site of N-myristoyl glycine attachment. GTP is bound by residues 20–27, 64–68, and 123–126; these read GLDSAGKS, DVGGQ, and NKQD.

The protein belongs to the small GTPase superfamily. Arf family. In terms of assembly, interacts with ARL14EP. Expressed in immature dendritic cells.

It localises to the cytoplasmic vesicle. Its function is as follows. GTPase that recruits MYO1E to MHC class II-containing vesicles via the effector protein ARL14EP and hence controls the movement of these vesicles along the actin cytoskeleton in dendritic cells. This Homo sapiens (Human) protein is ADP-ribosylation factor-like protein 14 (ARL14).